We begin with the raw amino-acid sequence, 221 residues long: Ktr system potassium uptake protein C (221 aa).

Residues 2-118 form the RCK N-terminal domain; that stretch reads KKEFAVIGLG…LSKIGADHIV (117 aa). NAD(+) contacts are provided by residues Arg-12, 32 to 34, 52 to 53, 74 to 76, 99 to 101, His-105, and Glu-121; these read DID, DS, IGE, and KAQ. An RCK C-terminal domain is found at 135–219; sequence NNVLDYLELS…ISRFEKRVLH (85 aa).

This sequence belongs to the KtrA potassium transport family. Homodimer, tetramer (dimer of homodimer) and octamer (tetramer of homodimer). Part of the KtrCD complex formed by an octameric catalytic ring of KtrC and a membrane associated dimer of KtrD forming a potassium channel.

It is found in the cell membrane. Functionally, catalytic subunit of the KtrCD potassium uptake transporter. The 2 major potassium transporter complexes KtrAB and KtrCD confer resistance to both suddenly imposed and prolonged osmotic stress. In Bacillus subtilis (strain 168), this protein is Ktr system potassium uptake protein C (ktrC).